The following is a 689-amino-acid chain: Pentatricopeptide repeat-containing protein At2g03380, mitochondrial (689 aa).

The transit peptide at 1–12 (MLRSITLSPTRR) directs the protein to the mitochondrion. PPR repeat units follow at residues 75 to 105 (DISI…IPEP), 106 to 140 (DFYL…GFRY), 141 to 171 (DDIV…LVKV), 175 to 205 (DNVV…ITLR), 206 to 240 (NVVC…NVLG), 241 to 275 (NEYT…GIEL), 276 to 306 (SSCL…HSHV), 307 to 341 (DLVM…EIKP), 342 to 372 (NCVT…SIKV), 376 to 406 (DTNV…ESEK), 407 to 441 (DIVA…SVTP), 442 to 476 (NGVT…GFLA), 479 to 509 (SVHV…IEEK), 510 to 544 (NTIT…QQKP), 545 to 580 (NEST…NFTP), and 581 to 611 (STKH…MPIQ). A type E motif; degenerate region spans residues 616-689 (CFGAFLHGCG…SKIAGHSTME (74 aa)).

This sequence belongs to the PPR family. PCMP-E subfamily.

Its subcellular location is the mitochondrion. The polypeptide is Pentatricopeptide repeat-containing protein At2g03380, mitochondrial (PCMP-E47) (Arabidopsis thaliana (Mouse-ear cress)).